A 648-amino-acid polypeptide reads, in one-letter code: DNA mismatch repair protein MutL (648 aa).

The tract at residues 336–443 (ERPFEPSSPQ…SGSAGESRAR (108 aa)) is disordered. Residues 370 to 381 (SPESKTHSTWNE) are compositionally biased toward polar residues. Residues 383-410 (SRVDTSRAETSRESRIDSPLGERTRDIA) are compositionally biased toward basic and acidic residues.

Belongs to the DNA mismatch repair MutL/HexB family.

Functionally, this protein is involved in the repair of mismatches in DNA. It is required for dam-dependent methyl-directed DNA mismatch repair. May act as a 'molecular matchmaker', a protein that promotes the formation of a stable complex between two or more DNA-binding proteins in an ATP-dependent manner without itself being part of a final effector complex. The sequence is that of DNA mismatch repair protein MutL from Shewanella sp. (strain ANA-3).